A 301-amino-acid chain; its full sequence is Aquaporin-10 (301 aa).

Residues 1–22 (MVFTQAPAEIMGHLRIRSLLAR) are Cytoplasmic-facing. A helical membrane pass occupies residues 23–41 (QCLAEFLGVFVLMLLTQGA). The Extracellular segment spans residues 42–55 (VAQAVTSGETKGNF). A helical membrane pass occupies residues 56–75 (FTMFLAGSLAVTIAIYVGGN). Topologically, residues 76–77 (VS) are cytoplasmic. An intramembrane region (discontinuously helical) is located at residues 78-90 (GAHLNPAFSLAMC). The NPA 1 motif lies at 82-84 (NPA). Residues 91-96 (IVGRLP) are Cytoplasmic-facing. The helical transmembrane segment at 97-121 (WVKLPIYILVQLLSAFCASGATYVL) threads the bilayer. The Extracellular segment spans residues 122–158 (YHDALQNYTGGNLTVTGPKETASIFATYPAPYLSLNN). Residues Asn-128 and Asn-133 are each glycosylated (N-linked (GlcNAc...) asparagine). A helical transmembrane segment spans residues 159–176 (GFLDQVLGTGMLIVGLLA). Over 177-188 (ILDRRNKGVPAG) the chain is Cytoplasmic. A helical transmembrane segment spans residues 189-205 (LEPVVVGMLILALGLSM). At 206–208 (GAN) the chain is on the extracellular side. The discontinuously helical intramembrane region spans 209–223 (CGIPLNPARDLGPRL). The short motif at 214-216 (NPA) is the NPA 2 element. Residues 224 to 241 (FTYVAGWGPEVFSAGNGW) are Extracellular-facing. Residues 242–262 (WWVPVVAPLVGATVGTATYQL) form a helical membrane-spanning segment. At 263 to 301 (LVALHHPEGPEPAQDLVSAQHKASELETPASAQMLECKL) the chain is on the cytoplasmic side.

The protein belongs to the MIP/aquaporin (TC 1.A.8) family. Homotetramer; each monomer provides an independent glycerol/water pore. Post-translationally, N-glycosylation at Asn-133 increases the stability of the protein but has no effect on its activity. Detected in epithelial cells on villi in the ileum, and also in stomach, jejunum, colon, rectum, white adipose tissue and placenta (at protein level). Expressed in duodenum and jejunum. Highest expression in absorptive epithelial cells at the tips of villi in the jejunum. Detected in subcutaneous adipose tissue.

It is found in the apical cell membrane. The protein resides in the cell membrane. It localises to the lipid droplet. It carries out the reaction glycerol(in) = glycerol(out). The catalysed reaction is H2O(in) = H2O(out). The enzyme catalyses urea(in) = urea(out). With respect to regulation, glycerol transport is regulated by pH, with the porin being permeable to glycerol at pH 5.5 but not at pH 7.4. Water permeability, however, is not influenced by pH. Its function is as follows. Aquaglyceroporins form homotetrameric transmembrane channels, with each monomer independently mediating glycerol and water transport across the plasma membrane along their osmotic gradient. Could also be permeable to urea. Among aquaglyceroporins, it exhibits a unique pH-gated glycerol transport activity, being more active at acidic pH. It most likely plays a central role in the efflux of glycerol formed during triglyceride hydrolysis in adipocytes and in glycerol uptake by enterocytes, as both processes occur and are stimulated at acidic pH. The polypeptide is Aquaporin-10 (Homo sapiens (Human)).